The following is a 657-amino-acid chain: Probable potassium transport system protein Kup (657 aa).

The interval 1-25 (MGSGPADEEHTVDTEPGVSPPRRTV) is disordered. 12 helical membrane-spanning segments follow: residues 35–55 (VVVGALGVVFGDIGTSPIYTI), 77–97 (VVSLIFWSVMLIVTATYVLLV), 127–147 (TAVLAGLGIFGAALFFGDSMI), 165–185 (PGLEEWIVPITAVIIVALFSV), 196–216 (LFGPVMIVWFVSIGACGVSGI), 234–254 (FFFGHFGIAFFALAAVVLAVT), 275–295 (WLVLVLPACVLSYLGQGALLL), 315–335 (WPMVLLATAATVIASQAVITG), 365–385 (IYVPWINWVLMVSVLTLVFAF), 394–414 (AFGMAVTGTITITTLLFFYIV), 422–442 (LWLVVCGAGCLLAVDLLFLAA), and 447–467 (LVHGAWLPLLIALTAFTVMTT).

Belongs to the HAK/KUP transporter (TC 2.A.72) family.

Its subcellular location is the cell membrane. The enzyme catalyses K(+)(in) + H(+)(in) = K(+)(out) + H(+)(out). Transport of potassium into the cell. Likely operates as a K(+):H(+) symporter. The chain is Probable potassium transport system protein Kup from Rhodococcus jostii (strain RHA1).